A 372-amino-acid chain; its full sequence is Ligninase C (372 aa).

The N-terminal stretch at methionine 1–arginine 26 is a signal peptide. Residue histidine 74 is the Proton acceptor of the active site. Ca(2+)-binding residues include aspartate 75, glycine 93, aspartate 95, and serine 97. N-linked (GlcNAc...) asparagine glycosylation is present at asparagine 129. Histidine 205 contributes to the heme b binding site. Ca(2+)-binding residues include threonine 206, aspartate 223, threonine 225, leucine 228, and aspartate 230. Residues threonine 346–lysine 372 are disordered.

It belongs to the peroxidase family. Ligninase subfamily. Ca(2+) is required as a cofactor. It depends on heme b as a cofactor.

It carries out the reaction 1-(3,4-dimethoxyphenyl)-2-(2-methoxyphenoxy)propane-1,3-diol + H2O2 = 3,4-dimethoxybenzaldehyde + guaiacol + glycolaldehyde + H2O. The catalysed reaction is 2 (3,4-dimethoxyphenyl)methanol + H2O2 = 2 (3,4-dimethoxyphenyl)methanol radical + 2 H2O. It functions in the pathway secondary metabolite metabolism; lignin degradation. In terms of biological role, depolymerization of lignin. Catalyzes the C(alpha)-C(beta) cleavage of the propyl side chains of lignin. The polypeptide is Ligninase C (Trametes versicolor (White-rot fungus)).